Consider the following 492-residue polypeptide: JmjC domain-containing histone demethylation protein 1 (492 aa).

Residues 4-72 form a PHD-type; atypical zinc finger; sequence PNICQHCQLK…SYRCPNHKEG (69 aa). The 156-residue stretch at 254–409 folds into the JmjC domain; sequence TAVRQNDLVD…THLKIVEIEK (156 aa). A substrate-binding site is contributed by threonine 302. Positions 305 and 307 each coordinate Fe cation. Residue lysine 322 participates in substrate binding. A Fe cation-binding site is contributed by histidine 377.

The protein belongs to the JHDM1 histone demethylase family. Requires Fe(2+) as cofactor.

The protein resides in the nucleus. The catalysed reaction is N(6),N(6)-dimethyl-L-lysyl(36)-[histone H3] + 2 2-oxoglutarate + 2 O2 = L-lysyl(36)-[histone H3] + 2 formaldehyde + 2 succinate + 2 CO2. Its function is as follows. Histone demethylase that specifically demethylates 'Lys-36' of histone H3, thereby playing a central role in histone code. Does not demethylate H3 'Lys-4' nor 'Lys-79'. This chain is JmjC domain-containing histone demethylation protein 1 (JHD1), found in Saccharomyces cerevisiae (strain ATCC 204508 / S288c) (Baker's yeast).